Consider the following 124-residue polypeptide: Fluoride-specific ion channel FluC 1 (124 aa).

4 consecutive transmembrane segments (helical) span residues 4-24, 36-56, 67-87, and 103-123; these read VLIGVAGAAGAVARLLVGAWI, GTFAVNIAGSLLLGLLTGLVV, VVLGAGFLGAFTTFSTWLLDL, and AALSTGLGLLAAWLGLALGWG. Gly-75 and Thr-78 together coordinate Na(+).

Belongs to the fluoride channel Fluc/FEX (TC 1.A.43) family.

The protein localises to the cell membrane. The catalysed reaction is fluoride(in) = fluoride(out). With respect to regulation, na(+) is not transported, but it plays an essential structural role and its presence is essential for fluoride channel function. Its function is as follows. Fluoride-specific ion channel. Important for reducing fluoride concentration in the cell, thus reducing its toxicity. This Symbiobacterium thermophilum (strain DSM 24528 / JCM 14929 / IAM 14863 / T) protein is Fluoride-specific ion channel FluC 1.